An 82-amino-acid polypeptide reads, in one-letter code: MSSTAAKKDVKSSAVPVTAVVEKKEFEEEEFEEFPVQEWAERAEGEEDDVNVWEDNWDDETHESEFSKQLKEELRKSGHQVA.

The disordered stretch occupies residues 56–82 (NWDDETHESEFSKQLKEELRKSGHQVA). Basic and acidic residues predominate over residues 63–76 (ESEFSKQLKEELRK).

The protein belongs to the DSS1/SEM1 family. As to quaternary structure, part of the 26S proteasome. In terms of tissue distribution, expressed in intestinal epithelium and head neurons.

It is found in the nucleus. The protein resides in the cytoplasm. In terms of biological role, subunit of the 26S proteasome which plays a role in ubiquitin-dependent proteolysis. Has an essential role in oogenesis and larval growth. Required for intestinal function and default lifespan. This is Probable 26S proteasome complex subunit dss-1 (dss-1) from Caenorhabditis elegans.